We begin with the raw amino-acid sequence, 469 residues long: Siroheme synthase (469 aa).

The precorrin-2 dehydrogenase /sirohydrochlorin ferrochelatase stretch occupies residues 1–203; that stretch reads MDYLPIFTDL…GQEQDAKQEL (203 aa). NAD(+) is bound by residues 22-23 and 43-44; these read DV and PV. Serine 128 is subject to Phosphoserine. Positions 214–469 are uroporphyrinogen-III C-methyltransferase; it reads GQVALIGSGP…LQQSAVVKLA (256 aa). S-adenosyl-L-methionine is bound at residue proline 223. Aspartate 246 acts as the Proton acceptor in catalysis. Lysine 268 (proton donor) is an active-site residue. S-adenosyl-L-methionine contacts are provided by residues 299–301, valine 304, 329–330, methionine 381, and glycine 410; these read GGD and TA.

The protein in the N-terminal section; belongs to the precorrin-2 dehydrogenase / sirohydrochlorin ferrochelatase family. This sequence in the C-terminal section; belongs to the precorrin methyltransferase family.

The catalysed reaction is uroporphyrinogen III + 2 S-adenosyl-L-methionine = precorrin-2 + 2 S-adenosyl-L-homocysteine + H(+). It catalyses the reaction precorrin-2 + NAD(+) = sirohydrochlorin + NADH + 2 H(+). The enzyme catalyses siroheme + 2 H(+) = sirohydrochlorin + Fe(2+). It functions in the pathway cofactor biosynthesis; adenosylcobalamin biosynthesis; precorrin-2 from uroporphyrinogen III: step 1/1. It participates in cofactor biosynthesis; adenosylcobalamin biosynthesis; sirohydrochlorin from precorrin-2: step 1/1. The protein operates within porphyrin-containing compound metabolism; siroheme biosynthesis; precorrin-2 from uroporphyrinogen III: step 1/1. Its pathway is porphyrin-containing compound metabolism; siroheme biosynthesis; siroheme from sirohydrochlorin: step 1/1. It functions in the pathway porphyrin-containing compound metabolism; siroheme biosynthesis; sirohydrochlorin from precorrin-2: step 1/1. Functionally, multifunctional enzyme that catalyzes the SAM-dependent methylations of uroporphyrinogen III at position C-2 and C-7 to form precorrin-2 via precorrin-1. Then it catalyzes the NAD-dependent ring dehydrogenation of precorrin-2 to yield sirohydrochlorin. Finally, it catalyzes the ferrochelation of sirohydrochlorin to yield siroheme. The sequence is that of Siroheme synthase from Photobacterium profundum (strain SS9).